Reading from the N-terminus, the 148-residue chain is Probable histone H2B.2 (148 aa).

The span at 1 to 32 (MAPKGEKKPAEKKPAEEKKSTVAEKAPAEKKP) shows a compositional bias: basic and acidic residues. The interval 1-57 (MAPKGEKKPAEKKPAEEKKSTVAEKAPAEKKPKAGKKLPKEGGSAAGEKKKKRSKKS) is disordered. N6-acetyllysine is present on residues K7, K36, and K37. Residue K144 forms a Glycyl lysine isopeptide (Lys-Gly) (interchain with G-Cter in ubiquitin) linkage.

This sequence belongs to the histone H2B family. In terms of assembly, the nucleosome is a histone octamer containing two molecules each of H2A, H2B, H3 and H4 assembled in one H3-H4 heterotetramer and two H2A-H2B heterodimers. The octamer wraps approximately 147 bp of DNA. In terms of processing, can be acetylated to form H2BK6ac, H2BK33ac and H2BK34ac. Monoubiquitinated to form H2BK143ub1; may give a specific tag for epigenetic transcriptional activation.

It is found in the nucleus. Its subcellular location is the chromosome. In terms of biological role, core component of nucleosome. Nucleosomes wrap and compact DNA into chromatin, limiting DNA accessibility to the cellular machineries which require DNA as a template. Histones thereby play a central role in transcription regulation, DNA repair, DNA replication and chromosomal stability. DNA accessibility is regulated via a complex set of post-translational modifications of histones, also called histone code, and nucleosome remodeling. The polypeptide is Probable histone H2B.2 (Medicago truncatula (Barrel medic)).